Consider the following 505-residue polypeptide: MTTTTDELVSYEDALASYDPVMGLEVHVELGTKTKMFCGCSTELGAEPNSQTCPTCLGMPGALPVVNAIGVESAIKIGLALHCEIAEWCRFARKNYFYPDMPKNFQTSQYDEPIAFNGYLDVQLEDGEVFRVEIERAHMEEDTGKSTHVGGATGRIHGASHSLLDYNRAGIPLIEIVTKPIEGAGERAPEVAKAYVAELRELIRALGVSEARMEMGQMRCDVNLSLRPHGREKFGTRSETKNVNSLRSVERAARFEIQRHAAVLNSGGTIIQETRHFHEDTGSTTSGRVKEEAEDYRYFPEPDLVPVAPSRAWVEELRAGLPEQPLARRNRLREEWGVNAHDMQSILNAGAIDPIVATIEAGADAASARKWWMGELARSANESGKALEDLPITPAQVARVAQLVVAGELNDKLARQVIEGVLAGEGTPDEVVEKRGLKVVSDEGALTAAVDEAIAGNPGVADKIRGGKVAAAGALVGAVMKATRGQADAARVKELILEKLGVSEG.

It belongs to the GatB/GatE family. GatB subfamily. As to quaternary structure, heterotrimer of A, B and C subunits.

It carries out the reaction L-glutamyl-tRNA(Gln) + L-glutamine + ATP + H2O = L-glutaminyl-tRNA(Gln) + L-glutamate + ADP + phosphate + H(+). The enzyme catalyses L-aspartyl-tRNA(Asn) + L-glutamine + ATP + H2O = L-asparaginyl-tRNA(Asn) + L-glutamate + ADP + phosphate + 2 H(+). In terms of biological role, allows the formation of correctly charged Asn-tRNA(Asn) or Gln-tRNA(Gln) through the transamidation of misacylated Asp-tRNA(Asn) or Glu-tRNA(Gln) in organisms which lack either or both of asparaginyl-tRNA or glutaminyl-tRNA synthetases. The reaction takes place in the presence of glutamine and ATP through an activated phospho-Asp-tRNA(Asn) or phospho-Glu-tRNA(Gln). In Streptomyces avermitilis (strain ATCC 31267 / DSM 46492 / JCM 5070 / NBRC 14893 / NCIMB 12804 / NRRL 8165 / MA-4680), this protein is Aspartyl/glutamyl-tRNA(Asn/Gln) amidotransferase subunit B.